Consider the following 308-residue polypeptide: Ribosomal RNA small subunit methyltransferase H (308 aa).

S-adenosyl-L-methionine-binding positions include 33 to 35, aspartate 51, phenylalanine 82, aspartate 96, and glutamine 103; that span reads GGY.

It belongs to the methyltransferase superfamily. RsmH family.

Its subcellular location is the cytoplasm. The catalysed reaction is cytidine(1402) in 16S rRNA + S-adenosyl-L-methionine = N(4)-methylcytidine(1402) in 16S rRNA + S-adenosyl-L-homocysteine + H(+). Specifically methylates the N4 position of cytidine in position 1402 (C1402) of 16S rRNA. The chain is Ribosomal RNA small subunit methyltransferase H from Rickettsia canadensis (strain McKiel).